We begin with the raw amino-acid sequence, 343 residues long: Signal peptide peptidase 2 (343 aa).

At 1–19 (MKTHERAANLALAGLSLAP) the chain is on the lumenal side. The helical transmembrane segment at 20-40 (LVVKVNPNANVILTACLAVYV) threads the bilayer. The Cytoplasmic portion of the chain corresponds to 41–62 (GCYRSVKPTPPAETMSKEHAMR). A helical membrane pass occupies residues 63–83 (FPLVGSAMLLSLFLLFKFLSK). The Lumenal segment spans residues 84–89 (DLVNTV). Residues 90–110 (LTAYFFILGIAALCATLLPSI) form a helical membrane-spanning segment. Over 111–141 (KRFLPKEWNDNAIVWRAPLFHSLSVEFTRSQ) the chain is Cytoplasmic. A helical transmembrane segment spans residues 142-162 (VVASIPGFFFCIWYAAKKHWL). Residues 163-165 (ANN) are Lumenal-facing. A helical membrane pass occupies residues 166 to 186 (VLGISFCIQGIEMLSLGSFKT). At 187–188 (GA) the chain is on the cytoplasmic side. The chain crosses the membrane as a helical span at residues 189-209 (ILLSGLFFYDIFWVFFTPVMV). The active site involves Asp198. The Lumenal portion of the chain corresponds to 210-230 (SVAKSFDAPIKLLFPTGDAAR). Residues 231–251 (PFSMLGLGDIVIPGIFVALAL) form a helical membrane-spanning segment. Residue Asp239 is part of the active site. Residues 252–266 (RFDVSRGIKNRYFNS) lie on the Cytoplasmic side of the membrane. A helical membrane pass occupies residues 267–287 (AFLGYTVGLTVTIIVMNWFQA). Residues 288–290 (AQP) are Lumenal-facing. A PAL motif is present at residues 290–292 (PAL). The chain crosses the membrane as a helical span at residues 291–311 (ALLYIVPGVIGFVAVHCLWNG). Residues 312-343 (EVKPLLEYNESKAEEEEACEEDTDSKQNKKKE) lie on the Cytoplasmic side of the membrane. Positions 324–334 (AEEEEACEEDT) are enriched in acidic residues. A disordered region spans residues 324 to 343 (AEEEEACEEDTDSKQNKKKE). The Endoplasmic reticulum targeting signal signature appears at 340 to 343 (KKKE).

Belongs to the peptidase A22B family. In terms of tissue distribution, ubiquitous.

Its subcellular location is the endoplasmic reticulum membrane. Intramembrane-cleaving aspartic protease (I-CLiP) that cleaves type II membrane signal peptides in the hydrophobic plane of the membrane. Catalyzes intramembrane proteolysis of some signal peptides after they have been cleaved from a preprotein, resulting in the release of the fragment from the ER membrane into the cytoplasm. The chain is Signal peptide peptidase 2 (SPP2) from Oryza sativa subsp. japonica (Rice).